A 689-amino-acid chain; its full sequence is Glycine--tRNA ligase beta subunit (689 aa).

Belongs to the class-II aminoacyl-tRNA synthetase family. Tetramer of two alpha and two beta subunits.

It is found in the cytoplasm. It catalyses the reaction tRNA(Gly) + glycine + ATP = glycyl-tRNA(Gly) + AMP + diphosphate. The protein is Glycine--tRNA ligase beta subunit of Yersinia pseudotuberculosis serotype O:1b (strain IP 31758).